We begin with the raw amino-acid sequence, 73 residues long: Large ribosomal subunit protein bL31 (73 aa).

Residues C16, C18, C38, and C41 each coordinate Zn(2+).

It belongs to the bacterial ribosomal protein bL31 family. Type A subfamily. In terms of assembly, part of the 50S ribosomal subunit. The cofactor is Zn(2+).

Binds the 23S rRNA. The sequence is that of Large ribosomal subunit protein bL31 from Vibrio vulnificus (strain YJ016).